The chain runs to 232 residues: tRNA (guanine-N(1)-)-methyltransferase (232 aa).

Residues Gly111 and 131–136 (IGDYIL) contribute to the S-adenosyl-L-methionine site.

It belongs to the RNA methyltransferase TrmD family. As to quaternary structure, homodimer.

The protein localises to the cytoplasm. It catalyses the reaction guanosine(37) in tRNA + S-adenosyl-L-methionine = N(1)-methylguanosine(37) in tRNA + S-adenosyl-L-homocysteine + H(+). In terms of biological role, specifically methylates guanosine-37 in various tRNAs. The polypeptide is tRNA (guanine-N(1)-)-methyltransferase (Bartonella quintana (strain Toulouse) (Rochalimaea quintana)).